Consider the following 178-residue polypeptide: Interleukin-10 (178 aa).

The signal sequence occupies residues 1-18 (MHSSALLCCLVVLTGVRA). Disulfide bonds link Cys30-Cys126 and Cys80-Cys132. Asn134 carries N-linked (GlcNAc...) asparagine glycosylation.

The protein belongs to the IL-10 family. In terms of assembly, homodimer. Interacts with IL10RA and IL10RB.

The protein resides in the secreted. Major immune regulatory cytokine that acts on many cells of the immune system where it has profound anti-inflammatory functions, limiting excessive tissue disruption caused by inflammation. Mechanistically, IL10 binds to its heterotetrameric receptor comprising IL10RA and IL10RB leading to JAK1 and STAT2-mediated phosphorylation of STAT3. In turn, STAT3 translocates to the nucleus where it drives expression of anti-inflammatory mediators. Targets antigen-presenting cells (APCs) such as macrophages and monocytes and inhibits their release of pro-inflammatory cytokines including granulocyte-macrophage colony-stimulating factor /GM-CSF, granulocyte colony-stimulating factor/G-CSF, IL-1 alpha, IL-1 beta, IL-6, IL-8 and TNF-alpha. Also interferes with antigen presentation by reducing the expression of MHC-class II and co-stimulatory molecules, thereby inhibiting their ability to induce T cell activation. In addition, controls the inflammatory response of macrophages by reprogramming essential metabolic pathways including mTOR signaling. The chain is Interleukin-10 (IL10) from Papio hamadryas (Hamadryas baboon).